The following is a 713-amino-acid chain: MADPTSSERLLVTAALPYANGPIHIGHLAGAYLPADLFVRYQRLKGEDVAFICGSDEMGVAILMRAIREDRTPEDIIDTYHPQIRDNFERFGMSFDYYGRTSSETHTETTQDFFRVLDENGGFDLKTDEQLYDPEAEMFLADRFVIGTCPVCGFEEAYGDQCEQCGSSLSPTELENPQSTLTDATPEFKETTHWYLPLGELQPQLEEWIGSHPEWKNNVVGQIQSWFDEGLKGRAITRDVLWGVPVPDDVAERHGLEAEGKVIYVWFDAPIGYISATKEWAAEQGEPDAWTDYWQDEDTRLVHFIGKDNIVFHCLMFPSMLMEHGDYVLPDNVPANEFLNLEGEKLSTSRGWAVWLHEYLDDFADERHAPDLLRYALATTLPETKDADFSWEGFQQRVNGELANVFGNFVHRTLTFAQRYFDGTVPPLEDPSEADRVMLDRMAEVPDTVGAAYEEHRTRDAVFETMALARRGNKYFNDTEPWHTHESDPQACANTIHVSLQVCAALSILFEPVLPSAAATLRERIGLENVRTSTPDDDPAGAVGWEDAGAPLLPAGHPIPSGPDPEPLFQKIDDDTIEAQIEKLRDRAAERDTDPSSTTDMDYEALSDNISFDDFTQLDLRAGTVTTAEPVPDADKLLRLEVDLGFEERQILAGVAEQMAPDDVVGLEVVVVANMAPKEMFGFESQGMVLMAEEPDGTFVPVTTEAEDGSVVR.

A 'HIGH' region motif is present at residues 17-27 (PYANGPIHIGH). Residues C149, C152, C162, and C165 each contribute to the Zn(2+) site. Positions 345-349 (KLSTS) match the 'KMSKS' region motif. T348 is a binding site for ATP. The segment at 530-564 (VRTSTPDDDPAGAVGWEDAGAPLLPAGHPIPSGPD) is disordered. In terms of domain architecture, tRNA-binding spans 614–713 (DFTQLDLRAG…TEAEDGSVVR (100 aa)).

The protein belongs to the class-I aminoacyl-tRNA synthetase family. MetG type 1 subfamily. As to quaternary structure, homodimer. The cofactor is Zn(2+).

It localises to the cytoplasm. It carries out the reaction tRNA(Met) + L-methionine + ATP = L-methionyl-tRNA(Met) + AMP + diphosphate. In terms of biological role, is required not only for elongation of protein synthesis but also for the initiation of all mRNA translation through initiator tRNA(fMet) aminoacylation. This is Methionine--tRNA ligase from Salinibacter ruber (strain DSM 13855 / M31).